The following is a 542-amino-acid chain: MASSDAEALCPPVLTAGAMQAADRYTIEEYGLPSFTLMETAGRGCAARIQDAYGPLEDEAVVVLCGKGNNGGDGLVVARHLVTDGARVHVVLASAPDELSDDAAHNLSLLRQLQADGAVGERLTIGELEDVETLTAAVAPLRPRLYVDALLGTGLTSDVREPIRSLVTWVNGRTAPTVALDVPTGLHSDTGAVLGVAVRADRTATMAAPKVGLRVGEGPTRAGTVEVVDIGMPPFVLDRAAEKPGCVRETTDAAVRAWWPARDPDAYKYSVGTALIVGGAPPFAGAPVMAAKAAGRSGAGYVRCAGPETIHATLAGALTTIPTLPLPTGDDDGIAPDAALDALAEAADTADAILVGPGLGRAPGTAQFVRRLVRTVDTPLVLDADGLNALAGHIDELADQRQAPWVLTPHAGEFRRLAGEEGALTDRVRAAQTYAERWDAVCLLKGMPSVVAGPTGRTVLGSIATPALATAGTGDVLAGQCVGLMAQGLSPLNAAAAALHVGGAAAERYGATHDPRSMVATDLLDMIPRVAAERFGEGRRQR.

Positions 1–243 are NAD(P)H-hydrate epimerase; that stretch reads MASSDAEALC…PFVLDRAAEK (243 aa). One can recognise a YjeF N-terminal domain in the interval 19–238; sequence MQAADRYTIE…DIGMPPFVLD (220 aa). Residues 69-73 form an NADPHX 1; for epimerase activity region; the sequence is NNGGD. Positions 70 and 148 each coordinate K(+). The NADPHX 1; for epimerase activity stretch occupies residues 152–158; it reads GTGLTSD. Asp181 provides a ligand contact to (6S)-NADPHX. A K(+)-binding site is contributed by Thr184. Positions 251-534 constitute a YjeF C-terminal domain; that stretch reads TDAAVRAWWP…DMIPRVAAER (284 aa). Residues 251 to 542 are ADP-dependent (S)-NAD(P)H-hydrate dehydratase; that stretch reads TDAAVRAWWP…ERFGEGRRQR (292 aa). Residue Gly358 coordinates (6S)-NADPHX. Residues 410-416 are NADPHX 2; for dehydratase activity; sequence HAGEFRR. ADP-binding positions include 445 to 449 and 465 to 474; these read KGMPS and TPALATAGTG. Asp475 serves as a coordination point for (6S)-NADPHX.

In the N-terminal section; belongs to the NnrE/AIBP family. The protein in the C-terminal section; belongs to the NnrD/CARKD family. Requires K(+) as cofactor.

The catalysed reaction is (6S)-NADHX + ADP = AMP + phosphate + NADH + H(+). It carries out the reaction (6S)-NADPHX + ADP = AMP + phosphate + NADPH + H(+). It catalyses the reaction (6R)-NADHX = (6S)-NADHX. The enzyme catalyses (6R)-NADPHX = (6S)-NADPHX. In terms of biological role, bifunctional enzyme that catalyzes the epimerization of the S- and R-forms of NAD(P)HX and the dehydration of the S-form of NAD(P)HX at the expense of ADP, which is converted to AMP. This allows the repair of both epimers of NAD(P)HX, a damaged form of NAD(P)H that is a result of enzymatic or heat-dependent hydration. The chain is Bifunctional NAD(P)H-hydrate repair enzyme Nnr (nnr) from Salinibacter ruber (strain DSM 13855 / M31).